Here is a 927-residue protein sequence, read N- to C-terminus: DNA mismatch repair protein MutS (927 aa).

The disordered stretch occupies residues 44 to 80 (DESLKRPRNRHKPTSVPSIPLDSESQEQLETADNDND). A compositionally biased stretch (acidic residues) spans 67–79 (ESQEQLETADNDN). Position 725–732 (725–732 (GPNASGKS)) interacts with ATP.

The protein belongs to the DNA mismatch repair MutS family.

Its function is as follows. This protein is involved in the repair of mismatches in DNA. It is possible that it carries out the mismatch recognition step. This protein has a weak ATPase activity. This Prochlorococcus marinus (strain MIT 9303) protein is DNA mismatch repair protein MutS.